Reading from the N-terminus, the 637-residue chain is Protein arginine N-methyltransferase 5 (637 aa).

Ala2 carries the N-acetylalanine modification. Residues 13–292 (RVSSGRDLNC…YLEYLSQNRP (280 aa)) are TIM barrel. The 308-residue stretch at 308-615 (LQSPLQPLMD…SNSKKVWYEW (308 aa)) folds into the SAM-dependent MTase PRMT-type domain. Tyr324 is an S-adenosyl-L-methionine binding site. Phe327 lines the a protein pocket. Residues 333 to 334 (KY), Glu392, and 419 to 420 (DM) each bind S-adenosyl-L-methionine. A protein is bound by residues Glu435 and Glu444. Residues Glu435 and Glu444 each act as proton donor/acceptor in the active site. The interval 465 to 637 (PGEYTSFLAP…PTGRSYTIGL (173 aa)) is beta barrel. The dimerization stretch occupies residues 488 to 494 (REKDRDP).

Belongs to the class I-like SAM-binding methyltransferase superfamily. Protein arginine N-methyltransferase family. In terms of assembly, forms, at least, homodimers and homotetramers. Component of the methylosome complex, composed of PRMT5, WDR77 and CLNS1A. Found in a complex composed of PRMT5, WDR77 and RIOK1. RIOK1 and CLNS1A associate with PRMT5 in a mutually exclusive fashion, which allows the recruitment of distinct methylation substrates, such as nucleolin/NCL and Sm proteins, respectively. Interacts with PRDM1. Identified in a complex composed of methylosome and PRMT1 and ERH. Interacts with EGFR; methylates EGFR and stimulates EGFR-mediated ERK activation. Interacts with HOXA9. Interacts with SRGAP2. Found in a complex with COPRS, RUNX1 and CBFB. Interacts with CHTOP; the interaction symmetrically methylates CHTOP, but seems to require the presence of PRMT1. Interacts with EPB41L3; this modulates methylation of target proteins. Component of a high molecular weight E2F-pocket protein complex, CERC (cyclin E1 repressor complex). Associates with SWI/SNF remodeling complexes containing SMARCA2 and SMARCA4. Interacts with JAK2, SSTR1, SUPT5H, BRAF and with active RAF1. Interacts with LSM11, PRMT7 and SNRPD3. Interacts with COPRS; promoting its recruitment on histone H4. Interacts with CLNS1A/pICln. Identified in a complex with CLNS1A/pICln and Sm proteins. Interacts with RPS10. Interacts with WDR77. Interacts with IWS1. Interacts with CRY1. Interacts with POLR2A. Interacts with SMN1/SMN2. Interacts with LYAR; this interaction is direct. Interacts with TTC5/STRAP; this interaction is DNA damage-dependent and promotes PRMT5 interaction with p53/TP53. Interacts with p53/TP53 in response to DNA damage; the interaction is TTC5/STRAP dependent. Interacts with FAM47E; the interaction is direct, promotes PRMT5 localization to chromatin, and does not disrupt its association with WDR77 or STUB1. Interacts with TDRD6. Interacts with STUB1. Interacts with MBD2. Does not interact with MBD3.

It is found in the cytoplasm. Its subcellular location is the nucleus. It localises to the golgi apparatus. It carries out the reaction L-arginyl-[protein] + 2 S-adenosyl-L-methionine = N(omega),N(omega)'-dimethyl-L-arginyl-[protein] + 2 S-adenosyl-L-homocysteine + 2 H(+). Its activity is regulated as follows. Activity is increased by EGF, HGF, FGF1 or FGF2 treatments, and slightly decreased by NGF treatment. In terms of biological role, arginine methyltransferase that can both catalyze the formation of omega-N monomethylarginine (MMA) and symmetrical dimethylarginine (sDMA), with a preference for the formation of MMA. Specifically mediates the symmetrical dimethylation of arginine residues in the small nuclear ribonucleoproteins Sm D1 (SNRPD1) and Sm D3 (SNRPD3); such methylation being required for the assembly and biogenesis of snRNP core particles. Methylates SUPT5H and may regulate its transcriptional elongation properties. May methylate the N-terminal region of MBD2. Mono- and dimethylates arginine residues of myelin basic protein (MBP) in vitro. May play a role in cytokine-activated transduction pathways. Negatively regulates cyclin E1 promoter activity and cellular proliferation. Methylates histone H2A and H4 'Arg-3' during germ cell development. Methylates histone H3 'Arg-8', which may repress transcription. Methylates the Piwi proteins (PIWIL1, PIWIL2 and PIWIL4), methylation of Piwi proteins being required for the interaction with Tudor domain-containing proteins and subsequent localization to the meiotic nuage. Methylates RPS10. Attenuates EGF signaling through the MAPK1/MAPK3 pathway acting at 2 levels. First, monomethylates EGFR; this enhances EGFR 'Tyr-1197' phosphorylation and PTPN6 recruitment, eventually leading to reduced SOS1 phosphorylation. Second, methylates RAF1 and probably BRAF, hence destabilizing these 2 signaling proteins and reducing their catalytic activity. Required for induction of E-selectin and VCAM-1, on the endothelial cells surface at sites of inflammation. Methylates HOXA9. Methylates and regulates SRGAP2 which is involved in cell migration and differentiation. Acts as a transcriptional corepressor in CRY1-mediated repression of the core circadian component PER1 by regulating the H4R3 dimethylation at the PER1 promoter. Methylates GM130/GOLGA2, regulating Golgi ribbon formation. Methylates H4R3 in genes involved in glioblastomagenesis in a CHTOP- and/or TET1-dependent manner. Symmetrically methylates POLR2A, a modification that allows the recruitment to POLR2A of proteins including SMN1/SMN2 and SETX. This is required for resolving RNA-DNA hybrids created by RNA polymerase II, that form R-loop in transcription terminal regions, an important step in proper transcription termination. Along with LYAR, binds the promoter of gamma-globin HBG1/HBG2 and represses its expression. Symmetrically methylates NCL. Methylates p53/TP53; methylation might possibly affect p53/TP53 target gene specificity. Involved in spliceosome maturation and mRNA splicing in prophase I spermatocytes through the catalysis of the symmetrical arginine dimethylation of SNRPB (small nuclear ribonucleoprotein-associated protein) and the interaction with tudor domain-containing protein TDRD6. The polypeptide is Protein arginine N-methyltransferase 5 (PRMT5) (Bos taurus (Bovine)).